Here is a 203-residue protein sequence, read N- to C-terminus: MEKTREGEIRRETKETDVFVKIDLDGSGKCSANTGIGFLDHMIQQLSSHGLFDIEVRANGDTHIDDHHTNEDVGIAIGQALSKALGDRVGIKRFGHFLAPLDEALIQVVVDCSGRPHLSFSLDIPSQKVGTYDTELVKEFFGAVVSNGGLTLHIRQLAGNNTHHIIEATFKSFARALRMATEIDPRRSSQIPSSKGVLEQAGQ.

The interval Asp184–Gln203 is disordered.

Belongs to the imidazoleglycerol-phosphate dehydratase family.

The protein localises to the cytoplasm. It carries out the reaction D-erythro-1-(imidazol-4-yl)glycerol 3-phosphate = 3-(imidazol-4-yl)-2-oxopropyl phosphate + H2O. It participates in amino-acid biosynthesis; L-histidine biosynthesis; L-histidine from 5-phospho-alpha-D-ribose 1-diphosphate: step 6/9. The sequence is that of Imidazoleglycerol-phosphate dehydratase from Prochlorococcus marinus (strain NATL1A).